The following is a 281-amino-acid chain: NADPH-dependent 7-cyano-7-deazaguanine reductase (281 aa).

87-89 (VES) is a substrate binding site. 89–90 (SK) serves as a coordination point for NADPH. Residue Cys-188 is the Thioimide intermediate of the active site. Asp-195 (proton donor) is an active-site residue. A substrate-binding site is contributed by 227-228 (HE). 256–257 (RG) lines the NADPH pocket.

The protein belongs to the GTP cyclohydrolase I family. QueF type 2 subfamily. In terms of assembly, homodimer.

The protein localises to the cytoplasm. The catalysed reaction is 7-aminomethyl-7-carbaguanine + 2 NADP(+) = 7-cyano-7-deazaguanine + 2 NADPH + 3 H(+). The protein operates within tRNA modification; tRNA-queuosine biosynthesis. In terms of biological role, catalyzes the NADPH-dependent reduction of 7-cyano-7-deazaguanine (preQ0) to 7-aminomethyl-7-deazaguanine (preQ1). The sequence is that of NADPH-dependent 7-cyano-7-deazaguanine reductase from Aliivibrio fischeri (strain ATCC 700601 / ES114) (Vibrio fischeri).